The following is a 337-amino-acid chain: Ornithine carbamoyltransferase, catabolic (337 aa).

Residues 57 to 60 (STRT), Q84, R108, and 135 to 138 (HPTQ) each bind carbamoyl phosphate. L-ornithine-binding positions include N167, D231, and 235–236 (SM). Carbamoyl phosphate contacts are provided by residues 272–273 (CL) and R317.

This sequence belongs to the aspartate/ornithine carbamoyltransferase superfamily. OTCase family.

The protein resides in the cytoplasm. The catalysed reaction is carbamoyl phosphate + L-ornithine = L-citrulline + phosphate + H(+). Its pathway is amino-acid degradation; L-arginine degradation via ADI pathway; carbamoyl phosphate from L-arginine: step 2/2. Functionally, reversibly catalyzes the transfer of the carbamoyl group from carbamoyl phosphate (CP) to the N(epsilon) atom of ornithine (ORN) to produce L-citrulline. The polypeptide is Ornithine carbamoyltransferase, catabolic (Streptococcus ratti).